We begin with the raw amino-acid sequence, 84 residues long: Small ribosomal subunit protein uS17 (84 aa).

Belongs to the universal ribosomal protein uS17 family. In terms of assembly, part of the 30S ribosomal subunit.

One of the primary rRNA binding proteins, it binds specifically to the 5'-end of 16S ribosomal RNA. The protein is Small ribosomal subunit protein uS17 of Thermoanaerobacter pseudethanolicus (strain ATCC 33223 / 39E) (Clostridium thermohydrosulfuricum).